Here is a 150-residue protein sequence, read N- to C-terminus: 16 kDa phloem protein 1 (150 aa).

Positions 1 to 108 (MGMGMMEVHL…LAEGVRKGKS (108 aa)) constitute a C2 domain. Ca(2+) is bound by residues D20, D27, D78, D80, and D86.

Ca(2+) serves as cofactor. In terms of tissue distribution, sieve elements of leaves, stems, roots and flowers.

In terms of biological role, binds to both sense and antisense RNA. Interacts with mesophyll plasmodesmata to mediate its own cell-to-cell transport and potentiate RNA trafficking. The protein is 16 kDa phloem protein 1 (PP16-1) of Cucurbita maxima (Pumpkin).